The chain runs to 451 residues: uncharacterized protein (451 aa).

Residues 1 to 59 (MLKKNDIVEVEISDLSHDGAGIAKVDGLVFFVDNALPTEKIRMRVLKVKKNIAFGKVES) form the TRAM domain. Residues Gln-283, Tyr-312, Glu-333, and Asp-381 each contribute to the S-adenosyl-L-methionine site. Cys-408 (nucleophile) is an active-site residue.

This sequence belongs to the class I-like SAM-binding methyltransferase superfamily. RNA M5U methyltransferase family.

This is an uncharacterized protein from Streptococcus mutans serotype c (strain ATCC 700610 / UA159).